The primary structure comprises 143 residues: Large ribosomal subunit protein uL11 (143 aa).

The protein belongs to the universal ribosomal protein uL11 family. Part of the ribosomal stalk of the 50S ribosomal subunit. Interacts with L10 and the large rRNA to form the base of the stalk. L10 forms an elongated spine to which L12 dimers bind in a sequential fashion forming a multimeric L10(L12)X complex. One or more lysine residues are methylated.

Functionally, forms part of the ribosomal stalk which helps the ribosome interact with GTP-bound translation factors. The protein is Large ribosomal subunit protein uL11 of Azotobacter vinelandii (strain DJ / ATCC BAA-1303).